The sequence spans 466 residues: MSVVPVADVLQGRVAVDQEVTVRGWVRTRRDSKAGISFLAVYDGSCFDPVQAVINNSLPNYNEEVLHLTTGCSVVVTGKVVASPGQGQSFEIQATKVEVAGWVEDPDTYPMAAKRHSIEYLREVAHLRPRTNLIGAVARVRHTLAQALHRFFDEQGFFWVSTPLITASDTEGAGEMFRVSTLDLENLPRNDQGRVDFDKDFFGKESFLTVSGQLNGETYACALSKIYTFGPTFRAENSNTSRHLAEFWMLEPEVAFADLEDNARLAEAMLKYVFNAVLEERADDMKFFAERVDKDAIARLERFVSTDFAQVDYTDAVAILERCGKTFENPVFWGVDLSSEHERYLAEEHFKAPVVVKNYPKEIKAFYMRLNEDGKTVAAMDVLAPGIGEIIGGSQREERLDVLDARMAEMGLNKEDYWWYRDLRRYGTVPHSGFGLGFERLIAYVTGVQNVRDVIPFPRTPRNASF.

The protein belongs to the class-II aminoacyl-tRNA synthetase family. As to quaternary structure, homodimer.

The protein localises to the cytoplasm. It catalyses the reaction tRNA(Asn) + L-asparagine + ATP = L-asparaginyl-tRNA(Asn) + AMP + diphosphate + H(+). The protein is Asparagine--tRNA ligase of Salmonella typhimurium (strain LT2 / SGSC1412 / ATCC 700720).